The sequence spans 509 residues: Photosystem II CP47 reaction center protein (509 aa).

Helical transmembrane passes span S21 to S36, I101 to W115, G140 to F156, I203 to N218, V237 to V252, and N457 to R472.

It belongs to the PsbB/PsbC family. PsbB subfamily. In terms of assembly, PSII is composed of 1 copy each of membrane proteins PsbA, PsbB, PsbC, PsbD, PsbE, PsbF, PsbH, PsbI, PsbJ, PsbK, PsbL, PsbM, PsbT, PsbY, PsbZ, Psb30/Ycf12, at least 3 peripheral proteins of the oxygen-evolving complex and a large number of cofactors. It forms dimeric complexes. Requires Binds multiple chlorophylls. PSII binds additional chlorophylls, carotenoids and specific lipids. as cofactor.

It is found in the plastid. The protein localises to the chloroplast thylakoid membrane. In terms of biological role, one of the components of the core complex of photosystem II (PSII). It binds chlorophyll and helps catalyze the primary light-induced photochemical processes of PSII. PSII is a light-driven water:plastoquinone oxidoreductase, using light energy to abstract electrons from H(2)O, generating O(2) and a proton gradient subsequently used for ATP formation. The protein is Photosystem II CP47 reaction center protein of Cyanidium caldarium (Red alga).